A 176-amino-acid polypeptide reads, in one-letter code: Peroxynitrite isomerase 1 (176 aa).

A disordered region spans residues 1–23; sequence MDENSTLSPAHSDAAASSSANTP. Low complexity predominate over residues 8–20; that stretch reads SPAHSDAAASSSA. The GXWXGXG signature appears at 37 to 43; that stretch reads GLWRGEG. Histidine 168 serves as a coordination point for heme b.

This sequence belongs to the nitrobindin family. Homodimer. Heme b serves as cofactor.

It catalyses the reaction peroxynitrite = nitrate. The protein operates within nitrogen metabolism. Functionally, heme-binding protein able to scavenge peroxynitrite and to protect free L-tyrosine against peroxynitrite-mediated nitration, by acting as a peroxynitrite isomerase that converts peroxynitrite to nitrate. Therefore, this protein likely plays a role in peroxynitrite sensing and in the detoxification of reactive nitrogen and oxygen species (RNS and ROS, respectively). Is able to bind nitric oxide (NO) in vitro, but may act as a sensor of peroxynitrite levels in vivo. The polypeptide is Peroxynitrite isomerase 1 (Rhodococcus jostii (strain RHA1)).